The primary structure comprises 153 residues: Ribonuclease 2 (153 aa).

This sequence belongs to the BetVI family.

The protein resides in the cytoplasm. Functionally, catalyzes the two-stage endonucleolytic cleavage to 3'-phosphomononucleotides and 3'-phosphooligonucleotides with 2',3'-cyclic phosphate intermediates. The sequence is that of Ribonuclease 2 from Panax ginseng (Korean ginseng).